We begin with the raw amino-acid sequence, 223 residues long: MOB-like protein phocein (223 aa).

Residues 1–23 (MTAATENRTVRRNGPGTKRADWN) are disordered. Zn(2+)-binding residues include Cys-92, Cys-97, His-169, and His-174.

Belongs to the MOB1/phocein family.

The protein resides in the cytoplasm. It is found in the perinuclear region. Its subcellular location is the membrane. It localises to the golgi apparatus. The protein localises to the golgi stack membrane. In terms of biological role, may play a role in membrane trafficking, specifically in membrane budding reactions. The chain is MOB-like protein phocein from Caenorhabditis elegans.